Reading from the N-terminus, the 218-residue chain is Peroxynitrite isomerase 2 (218 aa).

Residues 1-24 (MTPAGDTPERGSGDRAVAEAAERA) are disordered. A compositionally biased stretch (basic and acidic residues) spans 7 to 24 (TPERGSGDRAVAEAAERA). The GXWXGXG motif lies at 65–71 (GVWRGEG). Positions 181 and 208 each coordinate heme b.

Belongs to the nitrobindin family. In terms of assembly, homodimer. Requires heme b as cofactor.

The catalysed reaction is peroxynitrite = nitrate. Its pathway is nitrogen metabolism. Functionally, heme-binding protein able to scavenge peroxynitrite and to protect free L-tyrosine against peroxynitrite-mediated nitration, by acting as a peroxynitrite isomerase that converts peroxynitrite to nitrate. Therefore, this protein likely plays a role in peroxynitrite sensing and in the detoxification of reactive nitrogen and oxygen species (RNS and ROS, respectively). Is able to bind nitric oxide (NO) in vitro, but may act as a sensor of peroxynitrite levels in vivo. The protein is Peroxynitrite isomerase 2 of Mycolicibacterium smegmatis (strain ATCC 700084 / mc(2)155) (Mycobacterium smegmatis).